We begin with the raw amino-acid sequence, 320 residues long: Aspartate carbamoyltransferase catalytic subunit (320 aa).

Residues Arg68 and Thr69 each coordinate carbamoyl phosphate. Lys96 contributes to the L-aspartate binding site. Arg118, His148, and Gln151 together coordinate carbamoyl phosphate. L-aspartate-binding residues include Arg181 and Arg236. Carbamoyl phosphate is bound by residues Gly277 and Pro278.

The protein belongs to the aspartate/ornithine carbamoyltransferase superfamily. ATCase family. As to quaternary structure, heterododecamer (2C3:3R2) of six catalytic PyrB chains organized as two trimers (C3), and six regulatory PyrI chains organized as three dimers (R2).

The catalysed reaction is carbamoyl phosphate + L-aspartate = N-carbamoyl-L-aspartate + phosphate + H(+). The protein operates within pyrimidine metabolism; UMP biosynthesis via de novo pathway; (S)-dihydroorotate from bicarbonate: step 2/3. In terms of biological role, catalyzes the condensation of carbamoyl phosphate and aspartate to form carbamoyl aspartate and inorganic phosphate, the committed step in the de novo pyrimidine nucleotide biosynthesis pathway. The protein is Aspartate carbamoyltransferase catalytic subunit of Polaromonas naphthalenivorans (strain CJ2).